The primary structure comprises 138 residues: Putative pre-16S rRNA nuclease (138 aa).

It belongs to the YqgF nuclease family.

It localises to the cytoplasm. In terms of biological role, could be a nuclease involved in processing of the 5'-end of pre-16S rRNA. This is Putative pre-16S rRNA nuclease from Polaromonas sp. (strain JS666 / ATCC BAA-500).